The following is an 89-amino-acid chain: HssA/B-like protein 10 (89 aa).

The protein belongs to the hssA/B family.

This is HssA/B-like protein 10 (hssl10) from Dictyostelium discoideum (Social amoeba).